The following is a 361-amino-acid chain: 3-dehydroquinate synthase (361 aa).

Residues D71 to K76, G105 to D109, T129 to T130, K142, and K151 each bind NAD(+). The Zn(2+) site is built by E184, H247, and H264.

Belongs to the sugar phosphate cyclases superfamily. Dehydroquinate synthase family. Requires Co(2+) as cofactor. Zn(2+) is required as a cofactor. It depends on NAD(+) as a cofactor.

The protein localises to the cytoplasm. The enzyme catalyses 7-phospho-2-dehydro-3-deoxy-D-arabino-heptonate = 3-dehydroquinate + phosphate. Its pathway is metabolic intermediate biosynthesis; chorismate biosynthesis; chorismate from D-erythrose 4-phosphate and phosphoenolpyruvate: step 2/7. Functionally, catalyzes the conversion of 3-deoxy-D-arabino-heptulosonate 7-phosphate (DAHP) to dehydroquinate (DHQ). The protein is 3-dehydroquinate synthase of Pectobacterium atrosepticum (strain SCRI 1043 / ATCC BAA-672) (Erwinia carotovora subsp. atroseptica).